We begin with the raw amino-acid sequence, 577 residues long: Arginine--tRNA ligase (577 aa).

Residues 122–132 (PNVAKEMHVGH) carry the 'HIGH' region motif.

Belongs to the class-I aminoacyl-tRNA synthetase family. In terms of assembly, monomer.

The protein localises to the cytoplasm. It catalyses the reaction tRNA(Arg) + L-arginine + ATP = L-arginyl-tRNA(Arg) + AMP + diphosphate. In Escherichia coli O81 (strain ED1a), this protein is Arginine--tRNA ligase.